A 1280-amino-acid polypeptide reads, in one-letter code: Clustered mitochondria protein homolog (1280 aa).

Polar residues predominate over residues 1–27 (MAASSNDASKSAMANSNVTTEVAQTPS). 2 disordered regions span residues 1–49 (MAAS…GQLP) and 169–189 (GLDQSGKPKEDGPEQSPLADY). Positions 32-43 (VNGEVEATEEDG) are enriched in acidic residues. Residues 338-582 (DLARTQESYL…RLTPLDVAWI (245 aa)) enclose the Clu domain. Disordered stretches follow at residues 633-669 (KANKARGGRRRLPKAQKKADAGKEVDGEKKAEAEPEQ), 905-943 (GAAVPTPAAPQTNGSSTSSKKKKNKTITPPRADSPAVSL), and 1214-1280 (TGRN…TQKP). Positions 635–648 (NKARGGRRRLPKAQ) are enriched in basic residues. The span at 649–669 (KKADAGKEVDGEKKAEAEPEQ) shows a compositional bias: basic and acidic residues. The segment covering 1221–1235 (PAAATPSVSDAAAAA) has biased composition (low complexity). The segment covering 1245–1261 (VDQRKIEDLLKYIEGES) has biased composition (basic and acidic residues). Over residues 1265–1280 (PTKKRTQNPRKRTQKP) the composition is skewed to basic residues.

The protein belongs to the CLU family. In terms of assembly, may associate with the eukaryotic translation initiation factor 3 (eIF-3) complex.

Its subcellular location is the cytoplasm. Functionally, mRNA-binding protein involved in proper cytoplasmic distribution of mitochondria. This Phaeosphaeria nodorum (strain SN15 / ATCC MYA-4574 / FGSC 10173) (Glume blotch fungus) protein is Clustered mitochondria protein homolog.